We begin with the raw amino-acid sequence, 117 residues long: Protein Wnt-6 (117 aa).

S1 carries the O-palmitoleoyl serine; by PORCN lipid modification. Cysteines 83 and 98 form a disulfide. A glycan (N-linked (GlcNAc...) asparagine) is linked at N84.

It belongs to the Wnt family. In terms of processing, palmitoleoylation is required for efficient binding to frizzled receptors. Depalmitoleoylation leads to Wnt signaling pathway inhibition.

The protein localises to the secreted. It localises to the extracellular space. The protein resides in the extracellular matrix. Functionally, ligand for members of the frizzled family of seven transmembrane receptors. Probable developmental protein. May be a signaling molecule which affects the development of discrete regions of tissues. Is likely to signal over only few cell diameters. This Evasterias troschelii (Mottled sea star) protein is Protein Wnt-6 (WNT-6).